A 154-amino-acid chain; its full sequence is MKPSFSINSNYLFKRFFGKNFEAGIELCLQIIKDSLQLSFQPEFALMIVSPWKMKRLNRQFLNRKGVTDVISICYNENEAGFSPAIGEIFLCPKHIFKQAKQFGCTPWFLLTRNLIHGLLHLFEFDHEQSLAFESVTMFFQDEIHETVLKLWNR.

Zn(2+) is bound by residues histidine 117, histidine 121, and histidine 127.

Belongs to the endoribonuclease YbeY family. Requires Zn(2+) as cofactor.

It is found in the cytoplasm. Single strand-specific metallo-endoribonuclease involved in late-stage 70S ribosome quality control and in maturation of the 3' terminus of the 16S rRNA. The chain is Endoribonuclease YbeY from Mycoplasma pneumoniae (strain ATCC 29342 / M129 / Subtype 1) (Mycoplasmoides pneumoniae).